Here is a 329-residue protein sequence, read N- to C-terminus: Chlorophyllase-1, chloroplastic (329 aa).

Residues 1–21 constitute a chloroplast transit peptide; it reads MAAMVDAKPAASVQGTPLLAT. A GXSXG motif is present at residues 145-149; sequence GHSRG. Serine 147 (nucleophile) is an active-site residue. Active-site charge relay system residues include aspartate 169 and histidine 242.

This sequence belongs to the AB hydrolase superfamily. Lipase family.

The protein localises to the plastid. It localises to the chloroplast. The catalysed reaction is a chlorophyll + H2O = a chlorophyllide + phytol + H(+). It participates in porphyrin-containing compound metabolism; chlorophyll degradation. Its function is as follows. Catalyzes the hydrolysis of ester bond in chlorophyll to yield chlorophyllide and phytol. This Citrus sinensis (Sweet orange) protein is Chlorophyllase-1, chloroplastic (CHLASE1).